The sequence spans 148 residues: Deoxyuridine 5'-triphosphate nucleotidohydrolase (148 aa).

Substrate contacts are provided by residues 67–69, Asn-80, 84–86, and Met-94; these read RSG and LID.

This sequence belongs to the dUTPase family. Mg(2+) is required as a cofactor.

It catalyses the reaction dUTP + H2O = dUMP + diphosphate + H(+). Its pathway is pyrimidine metabolism; dUMP biosynthesis; dUMP from dCTP (dUTP route): step 2/2. In terms of biological role, this enzyme is involved in nucleotide metabolism: it produces dUMP, the immediate precursor of thymidine nucleotides and it decreases the intracellular concentration of dUTP so that uracil cannot be incorporated into DNA. This chain is Deoxyuridine 5'-triphosphate nucleotidohydrolase, found in Burkholderia mallei (strain NCTC 10247).